The following is a 339-amino-acid chain: Trace amine-associated receptor 1 (339 aa).

Over 1-25 (MMPFCHNIINISCVKNNWSNDVRAS) the chain is Extracellular. Cystine bridges form between Cys-5–Cys-178, Cys-13–Cys-88, and Cys-96–Cys-182. N-linked (GlcNAc...) asparagine glycans are attached at residues Asn-10 and Asn-17. A helical membrane pass occupies residues 26–46 (LYSLMVLIILTTLVGNLIVIV). Over 47-59 (SISHFKELHTPTN) the chain is Cytoplasmic. The chain crosses the membrane as a helical span at residues 60 to 80 (WLIHSMATVDFLPGCLVMPYS). The Extracellular segment spans residues 81–98 (MVRSAEHCWYFGEVFCKI). The helical transmembrane segment at 99 to 119 (HTSTDIMLSSASIFHLSFISI) threads the bilayer. Asp-103 provides a ligand contact to 2-phenylethylamine. Over 120–136 (DRYYAVCDPLRYKAKIN) the chain is Cytoplasmic. Residues 137–157 (ILVICVMIFISWSVPAVFAFG) form a helical membrane-spanning segment. Topologically, residues 158 to 188 (MIFLELNFKGAEEIYYKHVHCRGGCSVFFSK) are extracellular. The chain crosses the membrane as a helical span at residues 189-209 (ISGVLTFMTSFYIPGSIMLCV). Topologically, residues 210 to 252 (YYRIYLIAKEQARLINDANQKLQIGLEMKNGISQSKERKAVKT) are cytoplasmic. Residues 253–273 (LGIVMGVFLICWCPFFICTVM) traverse the membrane as a helical segment. Residues 274 to 287 (DPFLHYIIPPTLND) lie on the Extracellular side of the membrane. Residues 288 to 308 (VLIWFGYLNSTFNPMVYAFFY) traverse the membrane as a helical segment. The Cytoplasmic segment spans residues 309–339 (PWFRKALKMMLFGKIFQKDSSRCKLFLELSS).

It belongs to the G-protein coupled receptor 1 family.

The protein localises to the endomembrane system. Its subcellular location is the endoplasmic reticulum membrane. It localises to the cell membrane. Its function is as follows. Intracellular G-protein coupled receptor for trace amines, which recognizes endogenous amine-containing metabolites such as beta-phenylethylamine (beta-PEA), 3-iodothyronamine (T1AM), isoamylamine (IAA), cadaverine (CAD), cyclohexylamine (CHA), p-tyramine (p-TYR), trimethylamine (TMA), octopamine and tryptamine. Also functions as a receptor for various drugs and psychoactive substances, such as amphetamine and methamphetamine. Unresponsive to classical biogenic amines, such as epinephrine and histamine and only partially activated by dopamine and serotonin. Expressed in both the central and peripheral nervous system: TAAR1 activation regulates the activity of several neurotransmitter signaling pathways by (1) decreasing the basal firing rates of the neurons involved and by (2) lowering the sensitivity of receptors to neurotransmitters. Ligand binding causes a conformation change that triggers signaling via guanine nucleotide-binding proteins (G proteins) and modulates the activity of downstream effectors. TAAR1 is coupled with different G(i)/G(o)-, G(s)- or G(q)/G(11) classes of G alpha proteins depending on the ligand. CAD-binding is coupled to G(i)/G(o) G alpha proteins and mediates inhibition of adenylate cyclase activity. T1AM- or beta-PEA-binding is coupled to G(s) G alpha proteins and mediates activation of adenylate cyclase activity. CHA- or IAA-binding is coupled to G(q)/G(11) G alpha proteins and activates phospholipase C-beta, releasing diacylglycerol (DAG) and inositol 1,4,5-trisphosphate (IP3) second messengers. TMA-binding is coupled with all three G(i)/G(o)-, G(s)- or G(q)/G(11) G alpha protein subtypes. This is Trace amine-associated receptor 1 (TAAR1) from Pan troglodytes (Chimpanzee).